A 157-amino-acid chain; its full sequence is Transcriptional repressor NrdR (157 aa).

A zinc finger lies at 3 to 34 (CPFCSATDTKVIDSRLVADGHQVRRRRECLLC). Positions 49 to 139 (PRVVKQDGSR…VYRAFEDVSE (91 aa)) constitute an ATP-cone domain.

This sequence belongs to the NrdR family. The cofactor is Zn(2+).

In terms of biological role, negatively regulates transcription of bacterial ribonucleotide reductase nrd genes and operons by binding to NrdR-boxes. The sequence is that of Transcriptional repressor NrdR from Shewanella loihica (strain ATCC BAA-1088 / PV-4).